A 352-amino-acid chain; its full sequence is Pheromone-regulated membrane protein 6 (352 aa).

Residues 1–36 (MESSLQKLKFQDIDINLIPTAKWTTKLQYILYTWCQ) lie on the Extracellular side of the membrane. A helical membrane pass occupies residues 37–57 (SILHVAMFFSDIYTCIKLLAF). The Cytoplasmic portion of the chain corresponds to 58 to 76 (NTWSNNIIQPFLEFRISKW). The chain crosses the membrane as a helical span at residues 77 to 97 (LFSGCILCSSLILIWELVIGL). The Extracellular portion of the chain corresponds to 98 to 227 (RVYRKKEITS…VILSFMLFSF (130 aa)). The chain crosses the membrane as a helical span at residues 228–248 (IIWVILISKLILSIIIFIIFI). At 249–352 (RPRFLSSKRK…FPQKYKHKYI (104 aa)) the chain is on the cytoplasmic side.

It belongs to the KCH1 low affinity K(+) transporter family.

Its subcellular location is the cell membrane. The protein resides in the bud tip. It is found in the vacuole lumen. It catalyses the reaction K(+)(in) = K(+)(out). Its function is as follows. Low affinity potassium transporter that, with KCH1, participates in high-affinity Ca(2+) influx system (HACS) activation during the response to mating pheromone. Directly promotes K(+) influx and HACS may electrochemically respond to this K(+) influx. KCH1 and PRM6/KCH2 act at the apex of the calcium signaling pathway that is used for survival during prolonged exposures to mating pheromones. In Saccharomyces cerevisiae (strain ATCC 204508 / S288c) (Baker's yeast), this protein is Pheromone-regulated membrane protein 6.